The sequence spans 630 residues: Pro-interleukin-16 (630 aa).

2 disordered regions span residues 30–268 (ENPG…FPLT) and 316–343 (PKEG…ASDT). Low complexity predominate over residues 129 to 143 (IRASSSSSIKQRISS). S220 carries the phosphoserine modification. Polar residues predominate over residues 321-343 (SPTSSSNEDSAANGSAETSASDT). An interaction with PPP1R12A, PPP1R12B and PPP1R12C region spans residues 404-500 (KQLDSIHVTI…IVTRKLTAES (97 aa)). PDZ domains follow at residues 410–495 (HVTI…VTRK) and 532–617 (TVTL…IRRK).

In terms of assembly, homotetramer. Pro-interleukin-16 interacts (via PDZ 2 domain) with PPP1R12A, PPP1R12B and PPP1R12C. Pro-interleukin-16 interacts with GRIN2A. Pro-interleukin-16 interacts with GABPB1. Pro-interleukin-16 interacts (via PDZ 3 domain) with HDAC3.

The protein localises to the secreted. The protein resides in the cytoplasm. Its subcellular location is the nucleus. Functionally, interleukin-16 stimulates a migratory response in CD4+ lymphocytes, monocytes, and eosinophils. Primes CD4+ T-cells for IL-2 and IL-15 responsiveness. Also induces T-lymphocyte expression of interleukin 2 receptor. Ligand for CD4. In terms of biological role, pro-interleukin-16 is involved in cell cycle progression in T-cells. Appears to be involved in transcriptional regulation of SKP2 and is probably part of a transcriptional repression complex on the core promoter of the SKP2 gene. May act as a scaffold for GABPB1 (the DNA-binding subunit the GABP transcription factor complex) and HDAC3 thus maintaining transcriptional repression and blocking cell cycle progression in resting T-cells. This Macaca mulatta (Rhesus macaque) protein is Pro-interleukin-16 (IL16).